A 338-amino-acid chain; its full sequence is Taste receptor type 2 member 39 (338 aa).

Residues 1-30 (MLGRCFPPNTKEKQQLRMIKLCDPAESELS) are Extracellular-facing. Residues 31–51 (PFLITLTLAVLLAEYLTGIIA) form a helical membrane-spanning segment. Topologically, residues 52-74 (NGFITAIHAAEWVQNKSVSTSGR) are cytoplasmic. Residues 75–95 (ILVFLSVSRIALQSLMMLEIT) form a helical membrane-spanning segment. The Extracellular portion of the chain corresponds to 96–116 (ISSTSLSFYSEDAVYYAFKIS). A helical transmembrane segment spans residues 117 to 137 (FIFLNFCSLWFAAWLSFFYFV). The Cytoplasmic segment spans residues 138 to 156 (KIANFSYPLFLKLRWRISG). Residues 157–177 (LIPWLLWLSVFISFSHSMFCI) traverse the membrane as a helical segment. At 178–205 (NICTGYCDNSFPIHSSNSTEKTYFSEIS) the chain is on the extracellular side. Asn-194 is a glycosylation site (N-linked (GlcNAc...) asparagine). Residues 206–226 (VVSLAFFFNLGIVIPLIMFIL) form a helical membrane-spanning segment. Residues 227 to 262 (AAILLILSLKRHTLHMGSNATGSKDPSMEAHIGAIK) are Cytoplasmic-facing. The helical transmembrane segment at 263–283 (ATSYFLILYIFNAVALFIYLS) threads the bilayer. Topologically, residues 284–291 (NMFDINSL) are extracellular. A helical transmembrane segment spans residues 292-312 (WNTLCQIIMAAYPASHSILLI). Topologically, residues 313-338 (KDNPGLRRAWKQLQHRLHLYPKQWTL) are cytoplasmic.

It belongs to the G-protein coupled receptor T2R family.

The protein localises to the membrane. In terms of biological role, receptor that may play a role in the perception of bitterness and is gustducin-linked. May play a role in sensing the chemical composition of the gastrointestinal content. The activity of this receptor may stimulate alpha gustducin, mediate PLC-beta-2 activation and lead to the gating of TRPM5. This chain is Taste receptor type 2 member 39 (TAS2R39), found in Macaca mulatta (Rhesus macaque).